Consider the following 1445-residue polypeptide: MAPGRKRGANKAMAIGEMRLGDLVLAKVKGFPAWPAKIGQPEDWNQAPDPKKHFVQFYGTGEIGFVTPPDIQPFTSETKKKLSARCQGKTVKYFSQAVEEISAAFEESQKQKSDIVGNEALLNAVEPSVTKPKYLNQASSDGKSDKFSSRADPCLGKLVENNGAEINPDVGEQDSSISNNRNTSPSSEPVEHGSPDPILKVAVDDKIDNVTCTDHSDGTGNNLVNDQRIIRKTTDDSNKRCKDEVRAKRVPDSRAATDNHILGPNQKLKGSIKGQDHGSKKGQDHGCRKESSDSKVVTDLNIASSKKPKELLKEKKKRFENELGKSASGADESKRAAKRPRSEDAKDQKQCKSKRLVPVGEGKAEISDSTGVVSIFKREIVLGISALGGKNQFDKDMVAYTKRRKQTVEHTSVSSFPGSLVKEGANHPEQKISSSSDSDIKVQAAQLPKRRRAVCIYDDDDDDEDPKTPVHGGLSNIPIASTDAPKSANASHNTSIKAKLLAGSTDSVKTGKVPLYKHNKDASLALPDSVEGYNSRMGKPFKALLQKNIKPILRSPKNSYQLVSFKKQVTGQNKTAKVAGAGMPDSVEGPSNSSYMGKPVIKLPPQNVKQTLRSPKKSPQLFSTKELVAVQNKIAKVSGAGIPKKYHGDSSKDVVAGSDRVSSSHSQTANQRSKPAFGEKPTSTPKVATRLDVEVSRDTFVNLSADVIDVNQENGNAPLFSFGMSDSSSSCMKDLIAAAQAKRKQAHSQFSPFVNLDHNSLNIDSMQTSKSPFMVQNVSSPAADATLIVAQEHQEVLTPSNHGRQSSSSNQAGTEENEERRFSSGHRSVGGSLSGATEAAISRDTFEGMIETLSRTKESIRRATRVAIDCAKYGIANEVVELLIRKLEIEPHFPRKVDLFFLLDSIIQSSHSQKGRARSLYIPTVQAALPRLLGAAAPPGTGARENRHQCRKVLRLWLKRKIFPDFLLRRYIGDLGASGDDKTVGFSLRRPSRSERAVDDPLRDMEGMLVDEYGSNANFQLPGYLASLTFGDDEEEDLPSTSQEVKNTHMEVKITHMEEPVLALGKLEAHDSSSDKPHCVVDVNGGLEMEDASCQLKDDVCGIEAKEDSPATTCATELPSFPAGSPPLPHESPPSPPPQPPSSPPPPSSPPQLAPAPPPSDHCLPPPTAPLAPAQSIALPPSSITRPSMPSHPSLPLQPGFAPPAYPLLQHEYQISMQRDHSSIATSNQIAPVPVNAAHGRHADGGVKSEYLMPQSSSFAPVGMCSYGEPLPFISSKQLEYGNSDVLFKQEASSQNQQLRPINTSFLQRPMIRNLAPAPSSHFPLPCRIVQSEPQRSSFPHPYHFPSQPVDGRQHMNEEWRMPPNGCSADPQYGAWIGVRNPFPGSRTVTDGVFQPPPERPPSGTVRYQLAANNLQGGSTISGNIASQMLLSRPDVPSAAQYRPS.

Residues 20–77 form the PWWP domain; sequence LGDLVLAKVKGFPAWPAKIGQPEDWNQAPDPKKHFVQFYGTGEIGFVTPPDIQPFTSE. 7 disordered regions span residues 133-197, 211-302, 319-356, 409-439, 460-491, 641-685, and 797-835; these read KYLN…SPDP, TCTD…DLNI, FENE…SKRL, EHTS…SDSD, DDDD…ANAS, GIPK…TSTP, and LTPS…SLSG. Composition is skewed to polar residues over residues 173 to 187 and 211 to 225; these read QDSS…SPSS and TCTD…NLVN. Basic and acidic residues-rich tracts occupy residues 228–257, 274–293, and 331–350; these read RIIR…RAAT, GQDH…ESSD, and DESK…DQKQ. 2 stretches are compositionally biased toward polar residues: residues 660 to 673 and 797 to 814; these read RVSS…NQRS and LTPS…QAGT. In terms of domain architecture, CID spans 838–979; that stretch reads EAAISRDTFE…RYIGDLGASG (142 aa). A disordered region spans residues 1110–1203; it reads PATTCATELP…SLPLQPGFAP (94 aa). Over residues 1124–1170 the composition is skewed to pro residues; it reads GSPPLPHESPPSPPPQPPSSPPPPSSPPQLAPAPPPSDHCLPPPTAP.

Expressed throughout young primordia, and vegetative and reproductive apices.

Its subcellular location is the nucleus. Functionally, probable transcription factor that acts with partial redundancy with HULK2 and HULK3. Plays diverse and essential roles in the control of plant development, physiology and flowering time. The sequence is that of Protein HUA2-LIKE 1 from Arabidopsis thaliana (Mouse-ear cress).